The sequence spans 70 residues: Large ribosomal subunit protein uL29 (70 aa).

It belongs to the universal ribosomal protein uL29 family.

This chain is Large ribosomal subunit protein uL29, found in Prochlorococcus marinus (strain MIT 9313).